Consider the following 880-residue polypeptide: MAQHEVSMPPKYDHRAVEAGRYEWWLKGKFFEATGDPNKRPFTIVIPPPNVTGKLHLGHAWDTTLQDIITRMKRMQGYDVLWLPGMDHAGIATQAKVEEKLRQQGLSRYDLGREKFLEETWKWKEEYAGHIRSQWAKLGLGLDYTRERFTLDEGLSKAVREVFVSLYRKGLIYRGEYIINWDPVTKTALSDIEVVYKEVKGALYHLRYPLADGSGCIEVATTRPETMLGDTAVAVHPDDERYKHLIGKMVKLPIVGREIPIIADEYVDMEFGSGAVKITPAHDPNDFEIGNRHNLPRILVMNEDGTMNENAMQYQGLDRFECRKQIVRDLQEQGVLFKIEEHVHSVGHSERSGAVVEPYLSTQWFVKMKPLAEAAIKLQQTDEKVQFVPDRFEKTYLHWLENIRDWCISRQLWWGHRIPAWYHKETGEIYVDHEPPKDIENWEQDPDVLDTWFSSALWPFSTMGWPDTESPDYKRYYPTDVLVTGYDIIFFWVSRMIFQGLEFTGKRPFKDVLIHGLVRDAQGRKMSKSLGNGVDPMDVIDQYGADALRYFLATGSSPGQDLRFSTEKVEATWNFANKIWNASRFALMNMGGMTYEELDLSGEKTVADHWILTRLNETIETVTKLAEKYEFGEVGRTLYNFIWDDLCDWYIEMAKLPLYGADEAAKKTTRSVLAYVLDNTMRLLHPFMPFITEEIWQNLPHEGESITVAPWPQVRPELSNEEAAEEMRLLVDIIRAVRSVRAEVNTPPSKPIALYIKVKDEQVRAALMKNRAYLERFCNPSELLIDTNVPAPDKAMTAVVTGAELIMPLEGLINIEEEIKRLEKELDKWNKEVERVEKKLANEGFLAKAPAHVVEEERRKRQDYIEKREAVKARLAELKR.

The 'HIGH' region motif lies at proline 49–histidine 59. Positions lysine 525 to serine 529 match the 'KMSKS' region motif. An ATP-binding site is contributed by lysine 528. Positions leucine 809–arginine 880 form a coiled coil.

This sequence belongs to the class-I aminoacyl-tRNA synthetase family. ValS type 1 subfamily. As to quaternary structure, monomer.

It is found in the cytoplasm. It catalyses the reaction tRNA(Val) + L-valine + ATP = L-valyl-tRNA(Val) + AMP + diphosphate. Functionally, catalyzes the attachment of valine to tRNA(Val). As ValRS can inadvertently accommodate and process structurally similar amino acids such as threonine, to avoid such errors, it has a 'posttransfer' editing activity that hydrolyzes mischarged Thr-tRNA(Val) in a tRNA-dependent manner. In Geobacillus kaustophilus (strain HTA426), this protein is Valine--tRNA ligase.